We begin with the raw amino-acid sequence, 156 residues long: 2-C-methyl-D-erythritol 2,4-cyclodiphosphate synthase (156 aa).

Positions 9 and 11 each coordinate a divalent metal cation. 4-CDP-2-C-methyl-D-erythritol 2-phosphate contacts are provided by residues 9–11 (DAH) and 35–36 (HS). Residue H43 coordinates a divalent metal cation. 57–59 (DIG) is a binding site for 4-CDP-2-C-methyl-D-erythritol 2-phosphate.

This sequence belongs to the IspF family. In terms of assembly, homotrimer. A divalent metal cation is required as a cofactor.

The enzyme catalyses 4-CDP-2-C-methyl-D-erythritol 2-phosphate = 2-C-methyl-D-erythritol 2,4-cyclic diphosphate + CMP. Its pathway is isoprenoid biosynthesis; isopentenyl diphosphate biosynthesis via DXP pathway; isopentenyl diphosphate from 1-deoxy-D-xylulose 5-phosphate: step 4/6. Involved in the biosynthesis of isopentenyl diphosphate (IPP) and dimethylallyl diphosphate (DMAPP), two major building blocks of isoprenoid compounds. Catalyzes the conversion of 4-diphosphocytidyl-2-C-methyl-D-erythritol 2-phosphate (CDP-ME2P) to 2-C-methyl-D-erythritol 2,4-cyclodiphosphate (ME-CPP) with a corresponding release of cytidine 5-monophosphate (CMP). The protein is 2-C-methyl-D-erythritol 2,4-cyclodiphosphate synthase of Hydrogenobaculum sp. (strain Y04AAS1).